The chain runs to 843 residues: Eisosome protein 1 (843 aa).

N-acetylserine is present on Ser-2. Ser-2 carries the post-translational modification Phosphoserine. Positions 13 to 44 (HNIGKTSGGGSRTSSITSSKKSLKHGSKSLRK) are disordered. Residues 33-44 (KSLKHGSKSLRK) show a composition bias toward basic residues. A phosphoserine mark is found at Ser-88 and Ser-130. The disordered stretch occupies residues 120–174 (KMGPKVVRNNSITSATSKTSKESQTKRKSKESPGAAASKAYSMTMETTSLSSQTN). Polar residues-rich tracts occupy residues 127-137 (RNNSITSATSK) and 163-174 (TMETTSLSSQTN). Ser-182, Ser-401, Ser-584, and Ser-710 each carry phosphoserine. Positions 717–843 (DLPTQLEKIE…QDAISNQEKK (127 aa)) are disordered. The residue at position 720 (Thr-720) is a Phosphothreonine. The span at 752-764 (STAAKEATETSSA) shows a compositional bias: low complexity. Phosphoserine occurs at positions 763 and 775. Positions 781 to 797 (SGKEDANDCKSAEHSKE) are enriched in basic and acidic residues. The segment covering 798-810 (ISVSQKAGNNKSL) has biased composition (polar residues). 4 positions are modified to phosphoserine: Ser-816, Ser-828, Ser-829, and Ser-838.

The protein belongs to the EIS1 family.

Its subcellular location is the cytoplasmic granule. It is found in the cell membrane. In terms of biological role, required for normal formation of eisosomes, large cytoplasmic protein assemblies that localize to specialized domains on plasma membrane and mark the site of endocytosis. The polypeptide is Eisosome protein 1 (EIS1) (Saccharomyces cerevisiae (strain RM11-1a) (Baker's yeast)).